A 199-amino-acid polypeptide reads, in one-letter code: Probable GTP-binding protein EngB (199 aa).

Residues 28–199 enclose the EngB-type G domain; it reads DLPEIALAGR…DSWDAILEQV (172 aa). GTP is bound by residues 36–43, 63–67, 81–84, 148–151, and 180–182; these read GRSNVGKS, GKTQL, DVPG, TKAD, and FSS. 2 residues coordinate Mg(2+): serine 43 and threonine 65.

Belongs to the TRAFAC class TrmE-Era-EngA-EngB-Septin-like GTPase superfamily. EngB GTPase family. Mg(2+) serves as cofactor.

Necessary for normal cell division and for the maintenance of normal septation. The chain is Probable GTP-binding protein EngB from Streptococcus pyogenes serotype M3 (strain SSI-1).